The following is a 150-amino-acid chain: Globin-1 (150 aa).

Residues 11–150 (PLSDAEKNKI…MICILLSSAY (140 aa)) enclose the Globin domain. Residues H74 and H106 each coordinate heme b.

This sequence belongs to the globin family. In terms of assembly, monomer.

This chain is Globin-1, found in Mordacia mordax (Southern hemisphere lamprey).